Consider the following 365-residue polypeptide: NADH-quinone oxidoreductase subunit D (365 aa).

This sequence belongs to the complex I 49 kDa subunit family. In terms of assembly, NDH-1 is composed of 14 different subunits. Subunits NuoB, C, D, E, F, and G constitute the peripheral sector of the complex.

It localises to the cell membrane. The catalysed reaction is a quinone + NADH + 5 H(+)(in) = a quinol + NAD(+) + 4 H(+)(out). Its function is as follows. NDH-1 shuttles electrons from NADH, via FMN and iron-sulfur (Fe-S) centers, to quinones in the respiratory chain. The immediate electron acceptor for the enzyme in this species is believed to be a menaquinone. Couples the redox reaction to proton translocation (for every two electrons transferred, four hydrogen ions are translocated across the cytoplasmic membrane), and thus conserves the redox energy in a proton gradient. This chain is NADH-quinone oxidoreductase subunit D, found in Carboxydothermus hydrogenoformans (strain ATCC BAA-161 / DSM 6008 / Z-2901).